We begin with the raw amino-acid sequence, 270 residues long: CASP-like protein 4A1 (270 aa).

The tract at residues 1 to 110 is disordered; sequence MEELEKTQKF…PSFSSSSSTP (110 aa). The Cytoplasmic portion of the chain corresponds to 1 to 121; sequence MEELEKTQKF…ESKWASLIRK (121 aa). Residues 24–66 show a composition bias toward polar residues; sequence SSPINFEMSSRSSLHSLPQTTIESPPDSPTLSSIPDSHGSSPH. A compositionally biased stretch (basic and acidic residues) spans 85-97; sequence NGEEEKKVSESRR. Positions 100–110 are enriched in low complexity; that stretch reads RPSFSSSSSTP. The helical transmembrane segment at 122–142 threads the bilayer; the sequence is ALLGFRVIAFVSCLVSFSVMV. Residues 143 to 161 are Extracellular-facing; it reads SDRDKGWAHDSFYNYKEFR. A helical membrane pass occupies residues 162 to 182; it reads FCLAANVIGFVYSGFMICDLV. The Cytoplasmic segment spans residues 183-198; the sequence is YLLSTSIRRSRHNLRH. A helical transmembrane segment spans residues 199 to 221; sequence FLEFGLDQMLAYLLASASTSASI. Residues 222-246 lie on the Extracellular side of the membrane; that stretch reads RVDDWQSNWGADKFPDLARASVALS. Residues 247–267 form a helical membrane-spanning segment; it reads YVSFVAFAFCSLASGYALCAL. At 268 to 270 the chain is on the cytoplasmic side; that stretch reads RSI.

It belongs to the Casparian strip membrane proteins (CASP) family. Homodimer and heterodimers.

Its subcellular location is the cell membrane. The sequence is that of CASP-like protein 4A1 from Arabidopsis thaliana (Mouse-ear cress).